Reading from the N-terminus, the 174-residue chain is MEKMMHRETERQRRQEMASLYASLRSLLPLHFIKGKRSTSDQVNEAVNYIKYLQRKIKELSVRRDDLMVLSRGSLLGSSNGDFKEDVEMISGKNHVVVRQCLVGVEIMLSSRCCGGQPRFSSVLQVLSEYGLCLLNSISSIVDDRLVYTIQAEVNDMALMIDLAELEKRLIRMK.

The bHLH domain maps to 1-53 (MEKMMHRETERQRRQEMASLYASLRSLLPLHFIKGKRSTSDQVNEAVNYIKYL).

In terms of assembly, homodimer. Expressed constitutively in roots, leaves, stems, and flowers.

It localises to the nucleus. The polypeptide is Transcription factor bHLH36 (BHLH36) (Arabidopsis thaliana (Mouse-ear cress)).